A 1381-amino-acid polypeptide reads, in one-letter code: MKAPAVLAPGILLLLFTLVQRSNGECKEALTKSEMNVNMKYQLPNFTAETPIQNVILHEHHIFLGATNYIYVLNEEDLQKVAEHRTGPVLEHPDCFPCQDCSSKANLSGGVWKDNINMALVVDTYYDDQLISCGSVNRGTCQRHVFPHNHTADIQSEVHCIFSPQTEEPSQCPDCVVSALGTKVLLSVKHRFLNFFVGNTINSSYFPDHSLHSISVRRLKETKDGFMFLTDQSYVDVLPEFRDSYPIKYVHAFESNNFIYFLTVQRETLNAQTFHTRIIRFCSINSALHSYMEMPLECILTEKRKKRSTKKEVFNILQAAYVSKPGAQLARQIGASLNDDILFGVFAQSKPDSAEPMDRSAVCAFPIKYVNDFFNKIVNKNNVRCLQHFYGPNHEHCFNRTFQRNLLGCEARRDEYRTEFTTALQRIDLFAGQFNKVLLTSISTFVKGDLTIANLGTSEGRFIQIVVSRSVPSTPHVNFLLDFHPVSPEVIVEHPLNQNGYTLVVTGKKITKIPLNGLGCRHFQSCSQCLSAPSFVQCGWCHDKCVQSEECSSGTWTQETCLPTIYKVFPTSAPLEGGTRLTICGWDFGFRRNNKFDLKKTRVLLGNESCTLTLSESTMNTLKCTVGPAMNEHFNMSIIISNSHGTTQYSTFSYVDPIITSISPRYGPMSGGTLLTLTGNYLNSGNSRHISIGGKTCTLKSVSNSILECYTPAQTISTEFPVKLKIDLANRETSIFSYREDPIVYEIHPTKSFISGGSTITGIGKNLNSVSVPRMVINLHEARRNFTVACQHRSNSEIICCTTPSLQQLNLQLPLKTKAFFMLDGILSKYFDLIYVHNPVFKPFEKPVMISMGNENVLEIKGNDIDPEAVKGEVLKVGNKSCENIHLHSQAVLCTVPSDLLKLNSELNIEWKQAISSTVLGKVIVQPDQNFTGLIAGVVSISIALLLLLGLFLWLKKRKQIKDLGSELVRYDARVHTPHLDRLVSARSVSPTTEMVSNESVDYRATFPEDQFPNSSQNGSCRQVQYPLTDMSPILTSGDSDISSPLLQNTVHIDLSALNPELVQAVQHVVIGPSSLIVHFNEVIGRGHFGCVYHGTLLDNDGKKIHCAVKSLNRITDIGEVSQFLTEGIIMKDFSHPNVLSLLGICLRSEGSPLVVLPYMKHGDLRNFIRNETHNPTVKDLIGFGLQVAKGMKYLASKKFVHRDLAARNCMLDEKFTVKVADFGLARDMYDKEYYSVHNKTGAKLPVKWMALESLQTQKFTTKSDVWSFGVLLWELMTRGAPPYPDVNTFDITVYLLQGRRLLQPEYCPDPLYEVMLKCWHPKAEMRPSFSELVSRISAIFSTFIGEHYVHVNATYVNVKCVAPYPSLLSSQDNPDGEVDT.

Residues 1–24 (MKAPAVLAPGILLLLFTLVQRSNG) form the signal peptide. Over 25-932 (ECKEALTKSE…VIVQPDQNFT (908 aa)) the chain is Extracellular. A Sema domain is found at 27–515 (KEALTKSEMN…TGKKITKIPL (489 aa)). A glycan (N-linked (GlcNAc...) asparagine) is linked at Asn-45. 4 disulfides stabilise this stretch: Cys-95–Cys-101, Cys-98–Cys-160, Cys-133–Cys-141, and Cys-172–Cys-175. N-linked (GlcNAc...) asparagine glycosylation is present at Asn-106. N-linked (GlcNAc...) asparagine glycosylation occurs at Asn-149. N-linked (GlcNAc...) asparagine glycosylation occurs at Asn-202. 2 disulfide bridges follow: Cys-298–Cys-363 and Cys-385–Cys-397. An N-linked (GlcNAc...) asparagine glycan is attached at Asn-399. Disulfide bonds link Cys-520-Cys-538, Cys-526-Cys-561, Cys-529-Cys-545, and Cys-541-Cys-551. 3 IPT/TIG domains span residues 563-655 (PTIY…FSYV), 657-739 (PIIT…FSYR), and 742-836 (PIVY…LIYV). Thr-582 carries O-linked (Man) threonine glycosylation. Asn-607 and Asn-635 each carry an N-linked (GlcNAc...) asparagine glycan. O-linked (Man) threonine glycosylation is found at Thr-676 and Thr-761. N-linked (GlcNAc...) asparagine glycosylation is found at Asn-785, Asn-879, and Asn-930. The chain crosses the membrane as a helical span at residues 933-955 (GLIAGVVSISIALLLLLGLFLWL). The Cytoplasmic portion of the chain corresponds to 956-1381 (KKRKQIKDLG…QDNPDGEVDT (426 aa)). Ser-966 is subject to Phosphoserine. Thr-977 is subject to Phosphothreonine. Phosphoserine occurs at positions 990, 997, and 1000. Tyr-1003 carries the post-translational modification Phosphotyrosine. The Protein kinase domain occupies 1078–1345 (VHFNEVIGRG…RISAIFSTFI (268 aa)). ATP contacts are provided by residues 1084–1092 (IGRGHFGCV) and Lys-1110. Asp-1204 serves as the catalytic Proton acceptor. Residues 1212–1381 (LDEKFTVKVA…QDNPDGEVDT (170 aa)) are interaction with RANBP9. Tyr-1230 is subject to Phosphotyrosine. Tyr-1234 and Tyr-1235 each carry phosphotyrosine; by autocatalysis. Thr-1289 carries the phosphothreonine modification. Residues 1320–1359 (WHPKAEMRPSFSELVSRISAIFSTFIGEHYVHVNATYVNV) are interaction with MUC20. Phosphotyrosine; by autocatalysis occurs at positions 1349 and 1356. Residue Tyr-1365 is modified to Phosphotyrosine.

Belongs to the protein kinase superfamily. Tyr protein kinase family. As to quaternary structure, heterodimer made of an alpha chain (50 kDa) and a beta chain (145 kDa) which are disulfide linked. Binds PLXNB1. Interacts when phosphorylated with downstream effectors including STAT3, PIK3R1, SRC, PCLG1, GRB2 and GAB1. Interacts with SPSB1, SPSB2 and SPSB4. Interacts with INPP5D/SHIP1. When phosphorylated at Tyr-1356, interacts with INPPL1/SHIP2. Interacts with RANBP9 and RANBP10, as well as SPSB1, SPSB2, SPSB3 and SPSB4. SPSB1 binding occurs in the presence and in the absence of HGF, however HGF treatment has a positive effect on this interaction. Interacts with MUC20; prevents interaction with GRB2 and suppresses hepatocyte growth factor-induced cell proliferation. Interacts with GRB10. Interacts with PTPN1 and PTPN2. Interacts with tensin TNS3. Interacts (when phosphorylated) with tensin TNS4 (via SH2 domain); the interaction increases MET protein stability by inhibiting MET endocytosis and subsequent lysosomal degradation. In terms of processing, autophosphorylated in response to ligand binding on Tyr-1234 and Tyr-1235 in the kinase domain leading to further phosphorylation of Tyr-1349 and Tyr-1356 in the C-terminal multifunctional docking site. Dephosphorylated by PTPRJ at Tyr-1349 and Tyr-1365. Dephosphorylated by PTPN1 and PTPN2. Post-translationally, ubiquitinated. Ubiquitination by CBL regulates the receptor stability and activity through proteasomal degradation. O-mannosylation of IPT/TIG domains by TMEM260 is required for protein maturation. O-mannosylated residues are composed of single mannose glycans that are not elongated or modified.

The protein resides in the membrane. It carries out the reaction L-tyrosyl-[protein] + ATP = O-phospho-L-tyrosyl-[protein] + ADP + H(+). With respect to regulation, in its inactive state, the C-terminal tail interacts with the catalytic domain and inhibits the kinase activity. Upon ligand binding, the C-terminal tail is displaced and becomes phosphorylated, thus increasing the kinase activity. Its function is as follows. Receptor tyrosine kinase that transduces signals from the extracellular matrix into the cytoplasm by binding to hepatocyte growth factor/HGF ligand. Regulates many physiological processes including proliferation, scattering, morphogenesis and survival. Ligand binding at the cell surface induces autophosphorylation of MET on its intracellular domain that provides docking sites for downstream signaling molecules. Following activation by ligand, interacts with the PI3-kinase subunit PIK3R1, PLCG1, SRC, GRB2, STAT3 or the adapter GAB1. Recruitment of these downstream effectors by MET leads to the activation of several signaling cascades including the RAS-ERK, PI3 kinase-AKT, or PLCgamma-PKC. The RAS-ERK activation is associated with the morphogenetic effects while PI3K/AKT coordinates prosurvival effects. During embryonic development, MET signaling plays a role in gastrulation, development and migration of muscles and neuronal precursors, angiogenesis and kidney formation. In adults, participates in wound healing as well as organ regeneration and tissue remodeling. Also promotes differentiation and proliferation of hematopoietic cells. The sequence is that of Hepatocyte growth factor receptor (MET) from Aotus nancymaae (Ma's night monkey).